The following is a 258-amino-acid chain: Imidazole glycerol phosphate synthase subunit HisF (258 aa).

Active-site residues include D11 and D130.

This sequence belongs to the HisA/HisF family. As to quaternary structure, heterodimer of HisH and HisF.

It localises to the cytoplasm. It carries out the reaction 5-[(5-phospho-1-deoxy-D-ribulos-1-ylimino)methylamino]-1-(5-phospho-beta-D-ribosyl)imidazole-4-carboxamide + L-glutamine = D-erythro-1-(imidazol-4-yl)glycerol 3-phosphate + 5-amino-1-(5-phospho-beta-D-ribosyl)imidazole-4-carboxamide + L-glutamate + H(+). Its pathway is amino-acid biosynthesis; L-histidine biosynthesis; L-histidine from 5-phospho-alpha-D-ribose 1-diphosphate: step 5/9. Its function is as follows. IGPS catalyzes the conversion of PRFAR and glutamine to IGP, AICAR and glutamate. The HisF subunit catalyzes the cyclization activity that produces IGP and AICAR from PRFAR using the ammonia provided by the HisH subunit. The sequence is that of Imidazole glycerol phosphate synthase subunit HisF from Edwardsiella ictaluri (strain 93-146).